The chain runs to 256 residues: F-actin-capping protein subunit alpha (256 aa).

At Ser31 the chain carries Phosphoserine.

This sequence belongs to the F-actin-capping protein alpha subunit family. In terms of assembly, component of the F-actin capping complex, composed of a heterodimer of an alpha and a beta subunit.

The protein resides in the cytoplasm. The protein localises to the cytoskeleton. It is found in the actin patch. In terms of biological role, F-actin-capping proteins bind in a Ca(2+)-independent manner to the fast growing ends of actin filaments (barbed end) thereby blocking the exchange of subunits at these ends. Unlike other capping proteins (such as gelsolin and severin), these proteins do not sever actin filaments. Competes with formin cdc12 for attachment to the actin filaments barbed ends. Slowly replaces cdc12 on the barbed ends in preparation for filament disassembly during contractile ring constriction. This Schizosaccharomyces pombe (strain 972 / ATCC 24843) (Fission yeast) protein is F-actin-capping protein subunit alpha (acp1).